The sequence spans 181 residues: Organ-specific protein S2 (181 aa).

Repeat copies occupy residues 59 to 84 (HAKE…DNEI), 85 to 110 (HAKE…DNEI), 111 to 136 (HANE…DNEI), and 137 to 162 (HANE…DNEI). The segment at 59–162 (HAKENMGAIG…NASAYGDNEI (104 aa)) is 4 X 26 AA tandem repeats. Positions 94-181 (GEFEPRPNAS…PRPSMTKYNA (88 aa)) are disordered.

To organ specific protein P4. Expressed in stems.

This chain is Organ-specific protein S2, found in Pisum sativum (Garden pea).